The following is a 158-amino-acid chain: Probable cyclic pyranopterin monophosphate synthase (158 aa).

Substrate-binding positions include 78–80 (MCH) and 114–115 (ME). Residue aspartate 129 is part of the active site.

This sequence belongs to the MoaC family. As to quaternary structure, homohexamer; trimer of dimers.

It catalyses the reaction (8S)-3',8-cyclo-7,8-dihydroguanosine 5'-triphosphate = cyclic pyranopterin phosphate + diphosphate. The protein operates within cofactor biosynthesis; molybdopterin biosynthesis. Its function is as follows. Catalyzes the conversion of (8S)-3',8-cyclo-7,8-dihydroguanosine 5'-triphosphate to cyclic pyranopterin monophosphate (cPMP). The polypeptide is Probable cyclic pyranopterin monophosphate synthase (Methanosarcina acetivorans (strain ATCC 35395 / DSM 2834 / JCM 12185 / C2A)).